Here is a 105-residue protein sequence, read N- to C-terminus: MNREEMTLLGFEIVAYAGDARSKLLEALKAAENGDFAKADSLVVEAGSCIAEAHSSQTGMLAREASGEELPYSVTMMHGQDHLMTTILLKDVIHHLIELYKRGAK.

A PTS EIIA type-3 domain is found at 4–102 (EEMTLLGFEI…IHHLIELYKR (99 aa)). The active-site Tele-phosphohistidine intermediate is His-78. His-78 bears the Phosphohistidine; by HPr mark. Asp-81 serves as a coordination point for Mg(2+).

As to quaternary structure, homotrimer. The cofactor is Mg(2+).

It is found in the cytoplasm. Functionally, the phosphoenolpyruvate-dependent sugar phosphotransferase system (sugar PTS), a major carbohydrate active transport system, catalyzes the phosphorylation of incoming sugar substrates concomitantly with their translocation across the cell membrane. The enzyme II LacEF PTS system is involved in lactose transport. This is PTS system lactose-specific EIIA component from Lactococcus lactis subsp. lactis (Streptococcus lactis).